We begin with the raw amino-acid sequence, 134 residues long: uncharacterized protein (134 aa).

The protein localises to the mitochondrion. This is an uncharacterized protein from Saccharomyces cerevisiae (strain ATCC 204508 / S288c) (Baker's yeast).